A 209-amino-acid polypeptide reads, in one-letter code: uncharacterized protein (209 aa).

Active-site charge relay system residues include Ser-119 and His-160.

It belongs to the peptidase S51 family.

This is an uncharacterized protein from Listeria innocua serovar 6a (strain ATCC BAA-680 / CLIP 11262).